The following is a 74-amino-acid chain: UPF0346 protein YozE (74 aa).

The protein belongs to the UPF0346 family.

This chain is UPF0346 protein YozE (yozE), found in Bacillus subtilis (strain 168).